The sequence spans 130 residues: Small ribosomal subunit protein uS11 (130 aa).

The protein belongs to the universal ribosomal protein uS11 family. Part of the 30S ribosomal subunit. Interacts with proteins S7 and S18. Binds to IF-3.

Located on the platform of the 30S subunit, it bridges several disparate RNA helices of the 16S rRNA. Forms part of the Shine-Dalgarno cleft in the 70S ribosome. The polypeptide is Small ribosomal subunit protein uS11 (Syntrophomonas wolfei subsp. wolfei (strain DSM 2245B / Goettingen)).